An 83-amino-acid chain; its full sequence is uncharacterized protein (83 aa).

This is an uncharacterized protein from Escherichia phage 186 (Bacteriophage 186).